Here is a 184-residue protein sequence, read N- to C-terminus: MVDHYQVLGVTRNATKKEVKDAFRRLAIKYHPDKHAQSPEHVRHNATVRFKLVSEAYEVLNDDLKRASYNAGSDSDCFRRTSGSYSNPYGNRGGRAQGSGYGYGYGYSTRNRQASSFSSGFDSTFRYLTTRAFLLNLALAGGLYFAFTAIDTSGETLWKMRNSGKSFEEAMESIEKSKSHKDEG.

In terms of domain architecture, J spans 3-73; the sequence is DHYQVLGVTR…LKRASYNAGS (71 aa). A helical transmembrane segment spans residues 133–150; that stretch reads FLLNLALAGGLYFAFTAI.

This sequence belongs to the DnaJ family. C/III subfamily.

It localises to the membrane. Its function is as follows. Plays a continuous role in plant development probably in the structural organization of compartments. This is Chaperone protein dnaJ 72 (ATJ72) from Arabidopsis thaliana (Mouse-ear cress).